Reading from the N-terminus, the 947-residue chain is DEAD-box ATP-dependent RNA helicase 45 (947 aa).

Over residues 1-14 (MEEEEVVVVVDEEE) the composition is skewed to acidic residues. 2 disordered regions span residues 1 to 132 (MEEE…EDEI) and 159 to 221 (SMPA…EEFM). Basic and acidic residues-rich tracts occupy residues 15–31 (SERRRQKMIEEEKKRLD) and 42–61 (KEWQEQKRLEEEEAKRREQE). Low complexity predominate over residues 62–82 (AAAGAGTPAAAAGADGDSNAG). Acidic residues-rich tracts occupy residues 88–108 (DGEESDEEGYKEDSQNAEDDG) and 196–219 (DDSDSDYDDDDDDEGGSKDEDDEE). Residues 285 to 313 (KTWVQSGLTSKLLDTIKKLGFEKPMPIQA) carry the Q motif motif. Residues 316–494 (LPIIMSGRDC…RKVLTKPVEI (179 aa)) enclose the Helicase ATP-binding domain. 329 to 336 (AKTGSGKT) is an ATP binding site. The DEAD box signature appears at 442-445 (DEAD). The region spanning 479–647 (QVEILARKVL…AVPQDLKGLA (169 aa)) is the Helicase C-terminal domain. The tract at residues 658-710 (TEQAHGTGYGGSGFKFNEEEDEARRSAKKAQAREYGYEEDKSDSDSDEEGGVR) is disordered. Acidic residues predominate over residues 697-706 (DKSDSDSDEE). Residues 854 to 879 (TELSVKKAKSELKRVLEDCANHALNL) are a coiled coil.

Belongs to the DEAD box helicase family. DDX46/PRP5 subfamily.

It carries out the reaction ATP + H2O = ADP + phosphate + H(+). This Oryza sativa subsp. japonica (Rice) protein is DEAD-box ATP-dependent RNA helicase 45.